The following is an 84-amino-acid chain: Small ribosomal subunit protein bS20 (84 aa).

This sequence belongs to the bacterial ribosomal protein bS20 family.

Binds directly to 16S ribosomal RNA. The chain is Small ribosomal subunit protein bS20 from Lacticaseibacillus casei (strain BL23) (Lactobacillus casei).